A 1746-amino-acid polypeptide reads, in one-letter code: Tenascin (1746 aa).

Positions 1–22 (MGVVTRLLVGTFLASLALPAQG) are cleaved as a signal peptide. Residues 23–185 (GVLKKVIRHK…CEPGWKGPNC (163 aa)) are involved in hexamer formation. N-linked (GlcNAc...) asparagine glycosylation occurs at Asn38. 3 positions are modified to phosphoserine: Ser65, Ser70, and Ser72. Ser72 carries an O-linked (Xyl...) (chondroitin sulfate) serine glycan. Residues 118-145 (DVKELLSRLEELENLVSSLREQCTSGAG) are a coiled coil. 2 N-linked (GlcNAc...) asparagine glycosylation sites follow: Asn166 and Asn184. Residues 174-186 (CVCEPGWKGPNCS) enclose the EGF-like 1; incomplete domain. EGF-like domains follow at residues 187–217 (EPEC…EDCS), 218–249 (QLAC…DCSR), 250–280 (ETCP…EDCN), 281–311 (EPLC…EDCG), 312–342 (ELIC…EDCG), 343–373 (RLAC…ADCS), 374–404 (ERRC…EDCG), 405–435 (ELRC…EDCS), 436–466 (QLRC…YDCS), 467–497 (EMSC…EDCR), 498–528 (ELRC…PDCA), 529–559 (DLAC…KDCG), 560–589 (QRRC…GLDC), and 590–620 (GQRS…GEDC). Disulfide bonds link Cys190–Cys200, Cys194–Cys205, Cys207–Cys216, Cys221–Cys231, Cys225–Cys236, Cys238–Cys247, Cys252–Cys263, Cys256–Cys268, Cys270–Cys279, Cys284–Cys294, Cys288–Cys299, Cys301–Cys310, Cys315–Cys325, Cys319–Cys330, Cys332–Cys341, Cys346–Cys356, Cys350–Cys361, Cys363–Cys372, Cys377–Cys387, Cys381–Cys392, Cys394–Cys403, Cys408–Cys418, Cys412–Cys423, Cys425–Cys434, Cys439–Cys449, Cys443–Cys454, Cys456–Cys465, Cys470–Cys480, Cys474–Cys485, Cys487–Cys496, Cys501–Cys511, Cys505–Cys516, Cys518–Cys527, Cys532–Cys542, Cys536–Cys547, Cys549–Cys558, Cys563–Cys573, Cys567–Cys578, Cys580–Cys589, Cys594–Cys604, Cys598–Cys609, and Cys611–Cys620. N-linked (GlcNAc...) asparagine glycosylation is present at Asn327. Fibronectin type-III domains follow at residues 625-717 (PPKD…TPEG), 718-801 (LKFK…VTTT), 805-894 (APSQ…TGLD), 895-988 (APRN…LDPP), 989-1075 (KDFR…AGEP), 1076-1166 (EIGN…EAEP), 1167-1256 (EVDN…TAMG), 1257-1346 (SPKE…ALDG), 1347-1433 (PSGL…TDLD), and 1434-1522 (SPRD…IGLL). Asn788 is a glycosylation site (N-linked (GlcNAc...) asparagine). Residue Thr905 is modified to Phosphothreonine. 3 N-linked (GlcNAc...) asparagine glycosylation sites follow: Asn1034, Asn1079, and Asn1121. N-linked (GlcNAc...) asparagine glycosylation is present at Asn1354. In terms of domain architecture, Fibrinogen C-terminal spans 1520–1735 (GLLYPFPRDC…FAEMKLRPSN (216 aa)).

The protein belongs to the tenascin family. Homohexamer; disulfide-linked. A homotrimer may be formed in the triple coiled-coil region and may be stabilized by disulfide rings at both ends. Two of such half-hexabrachions may be disulfide linked within the central globule. Interacts with CSPG4. Interacts (via the 3rd fibronectin type-III domain) with integrin ITGA9:ITGB1. In terms of tissue distribution, submaxillary glands and brain.

The protein localises to the secreted. It localises to the extracellular space. Its subcellular location is the extracellular matrix. Its function is as follows. Extracellular matrix protein implicated in guidance of migrating neurons as well as axons during development, synaptic plasticity as well as neuronal regeneration. Promotes neurite outgrowth from cortical neurons grown on a monolayer of astrocytes. Ligand for integrins alpha-8/beta-1, alpha-9/beta-1, alpha-V/beta-3 and alpha-V/beta-6. In tumors, stimulates angiogenesis by elongation, migration and sprouting of endothelial cells. In Sus scrofa (Pig), this protein is Tenascin (TNC).